We begin with the raw amino-acid sequence, 182 residues long: tRNA-splicing endonuclease (182 aa).

Catalysis depends on residues Tyr119, His127, and Lys158.

The protein belongs to the tRNA-intron endonuclease family. Archaeal short subfamily. Homotetramer; although the tetramer contains four active sites, only two participate in the cleavage. Therefore, it should be considered as a dimer of dimers.

It catalyses the reaction pretRNA = a 3'-half-tRNA molecule with a 5'-OH end + a 5'-half-tRNA molecule with a 2',3'-cyclic phosphate end + an intron with a 2',3'-cyclic phosphate and a 5'-hydroxyl terminus.. Endonuclease that removes tRNA introns. Cleaves pre-tRNA at the 5'- and 3'-splice sites to release the intron. The products are an intron and two tRNA half-molecules bearing 2',3' cyclic phosphate and 5'-OH termini. Recognizes a pseudosymmetric substrate in which 2 bulged loops of 3 bases are separated by a stem of 4 bp. The polypeptide is tRNA-splicing endonuclease (Saccharolobus solfataricus (strain ATCC 35092 / DSM 1617 / JCM 11322 / P2) (Sulfolobus solfataricus)).